Reading from the N-terminus, the 268-residue chain is Proteasome subunit beta type-4 (268 aa).

It belongs to the peptidase T1B family. In terms of assembly, the 26S proteasome consists of a 20S proteasome core and two 19S regulatory subunits. The 20S proteasome core is composed of 28 subunits that are arranged in four stacked rings, resulting in a barrel-shaped structure. The two end rings are each formed by seven alpha subunits, and the two central rings are each formed by seven beta subunits. The catalytic chamber with the active sites is on the inside of the barrel.

Its subcellular location is the cytoplasm. It localises to the nucleus. In terms of biological role, non-catalytic component of the proteasome, a multicatalytic proteinase complex which is characterized by its ability to cleave peptides with Arg, Phe, Tyr, Leu, and Glu adjacent to the leaving group at neutral or slightly basic pH. The proteasome has an ATP-dependent proteolytic activity. This Drosophila melanogaster (Fruit fly) protein is Proteasome subunit beta type-4 (Prosbeta7).